A 403-amino-acid chain; its full sequence is D-mannonate dehydratase CC0532 (403 aa).

2 residues coordinate substrate: Asn38 and His123. Tyr160 (proton donor/acceptor) is an active-site residue. A Mg(2+)-binding site is contributed by Asp211. The active-site Proton donor/acceptor is the His213. The Mg(2+) site is built by Glu237 and Glu263. Residues Glu263, Arg284, His313, Asp317, and Glu340 each coordinate substrate.

This sequence belongs to the mandelate racemase/muconate lactonizing enzyme family. GalD subfamily. The cofactor is Mg(2+).

It carries out the reaction D-mannonate = 2-dehydro-3-deoxy-D-gluconate + H2O. It participates in carbohydrate metabolism; pentose and glucuronate interconversion. Catalyzes the dehydration of D-mannonate. Has no detectable activity with a panel of 70 other acid sugars (in vitro). This chain is D-mannonate dehydratase CC0532, found in Caulobacter vibrioides (strain ATCC 19089 / CIP 103742 / CB 15) (Caulobacter crescentus).